Reading from the N-terminus, the 284-residue chain is Transcription factor lir-3 (284 aa).

Over residues glutamate 50 to glutamate 60 the composition is skewed to basic and acidic residues. The disordered stretch occupies residues glutamate 50 to arginine 71. Residues tyrosine 224 to histidine 247 form a C2H2-type zinc finger.

In terms of tissue distribution, expressed in FLP neurons.

The protein localises to the nucleus. Its function is as follows. Positively regulates the RNA polymerase III-associated transcription of small non-coding RNAs. This chain is Transcription factor lir-3, found in Caenorhabditis elegans.